The chain runs to 264 residues: H-2 class II histocompatibility antigen, E-D beta chain (264 aa).

Residues 1-31 form the signal peptide; it reads MVWLPRVPCVAAVILLLTVLSPPVALVRDTR. A beta-1 region spans residues 32–121; that stretch reads PRFLEYVTSE…ISDKFLVRRR (90 aa). Over 32–225 the chain is Extracellular; it reads PRFLEYVTSE…KAQSTSAQNK (194 aa). 2 disulfides stabilise this stretch: Cys42–Cys106 and Cys144–Cys200. Asn46 is a glycosylation site (N-linked (GlcNAc...) asparagine). The beta-2 stretch occupies residues 122 to 215; sequence VEPTVTVYPT…SLTDPVTVEW (94 aa). In terms of domain architecture, Ig-like C1-type spans 124–214; that stretch reads PTVTVYPTKT…PSLTDPVTVE (91 aa). A connecting peptide region spans residues 216–225; that stretch reads KAQSTSAQNK. Residues 226 to 248 traverse the membrane as a helical segment; sequence MLSGVGGFVLGLLFLGAGLFIYF. The Cytoplasmic segment spans residues 249–264; sequence RNQKGQSGLQPTGLLS.

The protein belongs to the MHC class II family.

It localises to the membrane. The sequence is that of H-2 class II histocompatibility antigen, E-D beta chain from Mus musculus (Mouse).